Reading from the N-terminus, the 325-residue chain is UPF0285 protein MMP0642 (325 aa).

Belongs to the UPF0285 family.

This is UPF0285 protein MMP0642 from Methanococcus maripaludis (strain DSM 14266 / JCM 13030 / NBRC 101832 / S2 / LL).